The following is an 880-amino-acid chain: DNA mismatch repair protein MutS (880 aa).

624–631 (GPNMAGKS) serves as a coordination point for ATP.

The protein belongs to the DNA mismatch repair MutS family.

Functionally, this protein is involved in the repair of mismatches in DNA. It is possible that it carries out the mismatch recognition step. This protein has a weak ATPase activity. This Alkaliphilus metalliredigens (strain QYMF) protein is DNA mismatch repair protein MutS.